Here is a 134-residue protein sequence, read N- to C-terminus: MLWQAYVDDHLMCDIEGHEGHRLTAAAIVGHDGSVWAQSATFPQFKPEEMNGIMTDFNEPGHLAPTGLHLGGTKYMVIQGEAGAVIRGKKGSGGITIKETGQALVCGIYKEPVTPGQCNMVVERLGDYLLEQGL.

Residues C13 and C118 are joined by a disulfide bond. The Involved in PIP2 interaction signature appears at 84-100 (AVIRGKKGSGGITIKET). Position 114 is a phosphothreonine (T114).

Belongs to the profilin family. In terms of assembly, occurs in many kinds of cells as a complex with monomeric actin in a 1:1 ratio. In terms of processing, phosphorylated by MAP kinases.

It localises to the cytoplasm. It is found in the cytoskeleton. In terms of biological role, binds to actin and affects the structure of the cytoskeleton. At high concentrations, profilin prevents the polymerization of actin, whereas it enhances it at low concentrations. This Olea europaea (Common olive) protein is Profilin-2.